The chain runs to 140 residues: Large ribosomal subunit protein bL17 (140 aa).

This sequence belongs to the bacterial ribosomal protein bL17 family. In terms of assembly, part of the 50S ribosomal subunit. Contacts protein L32.

The sequence is that of Large ribosomal subunit protein bL17 from Rhizorhabdus wittichii (strain DSM 6014 / CCUG 31198 / JCM 15750 / NBRC 105917 / EY 4224 / RW1) (Sphingomonas wittichii).